A 163-amino-acid polypeptide reads, in one-letter code: ATP synthase subunit b (163 aa).

The propeptide occupies methionine 1 to glycine 11. The chain crosses the membrane as a helical span at residues glycine 16–leucine 36.

Belongs to the ATPase B chain family. F-type ATPases have 2 components, F(1) - the catalytic core - and F(0) - the membrane proton channel. F(1) has five subunits: alpha(3), beta(3), gamma(1), delta(1), epsilon(1). F(0) has three main subunits: a(1), b(2) and c(10-14). The alpha and beta chains form an alternating ring which encloses part of the gamma chain. F(1) is attached to F(0) by a central stalk formed by the gamma and epsilon chains, while a peripheral stalk is formed by the delta and b chains.

The protein resides in the cell membrane. Functionally, f(1)F(0) ATP synthase produces ATP from ADP in the presence of a proton or sodium gradient. F-type ATPases consist of two structural domains, F(1) containing the extramembraneous catalytic core and F(0) containing the membrane proton channel, linked together by a central stalk and a peripheral stalk. During catalysis, ATP synthesis in the catalytic domain of F(1) is coupled via a rotary mechanism of the central stalk subunits to proton translocation. Its function is as follows. Component of the F(0) channel, it forms part of the peripheral stalk, linking F(1) to F(0). The polypeptide is ATP synthase subunit b (Bacillus sp. (strain PS3)).